The chain runs to 688 residues: Glycine--tRNA ligase beta subunit (688 aa).

Belongs to the class-II aminoacyl-tRNA synthetase family. As to quaternary structure, tetramer of two alpha and two beta subunits.

The protein localises to the cytoplasm. The catalysed reaction is tRNA(Gly) + glycine + ATP = glycyl-tRNA(Gly) + AMP + diphosphate. This is Glycine--tRNA ligase beta subunit from Listeria monocytogenes serotype 4b (strain CLIP80459).